A 290-amino-acid chain; its full sequence is Acetylglutamate kinase (290 aa).

Residues 60 to 61, R82, and N187 contribute to the substrate site; that span reads GG.

This sequence belongs to the acetylglutamate kinase family. ArgB subfamily.

The protein resides in the cytoplasm. It carries out the reaction N-acetyl-L-glutamate + ATP = N-acetyl-L-glutamyl 5-phosphate + ADP. It participates in amino-acid biosynthesis; L-arginine biosynthesis; N(2)-acetyl-L-ornithine from L-glutamate: step 2/4. Catalyzes the ATP-dependent phosphorylation of N-acetyl-L-glutamate. In Marinobacter nauticus (strain ATCC 700491 / DSM 11845 / VT8) (Marinobacter aquaeolei), this protein is Acetylglutamate kinase.